A 338-amino-acid polypeptide reads, in one-letter code: Anthranilate phosphoribosyltransferase (338 aa).

Residues glycine 81, 84 to 85 (GD), threonine 89, 91 to 94 (NIST), 109 to 117 (KHGNRNLSS), and alanine 121 contribute to the 5-phospho-alpha-D-ribose 1-diphosphate site. An anthranilate-binding site is contributed by glycine 81. Serine 93 contributes to the Mg(2+) binding site. Residue asparagine 112 participates in anthranilate binding. Arginine 167 contributes to the anthranilate binding site. 2 residues coordinate Mg(2+): aspartate 226 and glutamate 227.

This sequence belongs to the anthranilate phosphoribosyltransferase family. Homodimer. Requires Mg(2+) as cofactor.

The catalysed reaction is N-(5-phospho-beta-D-ribosyl)anthranilate + diphosphate = 5-phospho-alpha-D-ribose 1-diphosphate + anthranilate. The protein operates within amino-acid biosynthesis; L-tryptophan biosynthesis; L-tryptophan from chorismate: step 2/5. Catalyzes the transfer of the phosphoribosyl group of 5-phosphorylribose-1-pyrophosphate (PRPP) to anthranilate to yield N-(5'-phosphoribosyl)-anthranilate (PRA). This is Anthranilate phosphoribosyltransferase from Cereibacter sphaeroides (strain ATCC 17029 / ATH 2.4.9) (Rhodobacter sphaeroides).